Here is a 369-residue protein sequence, read N- to C-terminus: CLIP domain-containing serine protease HP8 (369 aa).

The N-terminal stretch at 1–24 is a signal peptide; sequence MKTPFEKIRIISCILVIVSTNVVG. The propeptide occupies 25–81; the sequence is QKCNGGANCIPLEECTDLFQQLKQGNSPQLTRLLRGLHCGFEDLNSPKICCPPEFLA. The Clip domain maps to 26–75; sequence KCNGGANCIPLEECTDLFQQLKQGNSPQLTRLLRGLHCGFEDLNSPKICC. Intrachain disulfides connect Cys27–Cys74, Cys33–Cys63, Cys39–Cys75, Cys105–Cys239, Cys142–Cys158, Cys186–Cys191, Cys286–Cys303, and Cys313–Cys344. The region spanning 113 to 368 is the Peptidase S1 domain; it reads IFGGIQTEID…FMDWILSKLE (256 aa). The Charge relay system role is filled by His157. Ca(2+) contacts are provided by Glu177, Asn179, Thr182, and Asp185. Asn179 carries N-linked (GlcNAc...) asparagine glycosylation. The Charge relay system role is filled by Asp219. Ser317 functions as the Charge relay system in the catalytic mechanism.

Belongs to the peptidase S1 family. CLIP subfamily. As to quaternary structure, in the active form, heterodimer of a light chain and a heavy chain; disulfide-linked. In terms of processing, proteolytically cleaved for activation. Cleavage produces a light chain and a catalytic heavy chain which remains covalently associated probably through an interchain disulfide bond. In larvae, expressed in the fat body and hemocytes.

The protein localises to the secreted. It is found in the cytoplasm. Its activity is regulated as follows. Inhibited by (p-amidinophenyl) methanesulfonyl fluoride, p-nitrophenyl-p'-guanidinobenzoate, D-phenylalanyl-L-prolyl-L-arginyl chloromethane, leupeptin, antipain and to a lesser extent by antithrombin III. Endopeptidase with selective post-Arg cleavage site. Functions in the innate immune response to fungal and Gram-positive bacterial infections. Upon pathogen infection promotes nodulation; a cellular defense response in which hemocytes surround and isolate invading pathogens forming aggregates called nodules. Involved in activating nodule formation in response to infection with M.luteus, E.coli or S.cerevisiae. Able to bind the microbes M.luteus, E.coli or S.cerevisiae. According to another report, does not bind microorganisms. The sequence is that of CLIP domain-containing serine protease HP8 from Bombyx mori (Silk moth).